We begin with the raw amino-acid sequence, 363 residues long: 5-formaminoimidazole-4-carboxamide-1-(beta)-D-ribofuranosyl 5'-monophosphate synthetase (363 aa).

The 5-amino-1-(5-phospho-beta-D-ribosyl)imidazole-4-carboxamide site is built by histidine 29 and serine 96. In terms of domain architecture, ATP-grasp spans 118–354 (RDILRWEAER…ISREIKNAIE (237 aa)). Residues 148-210 (PEDI…TNFC) and glutamate 232 contribute to the ATP site. 5-amino-1-(5-phospho-beta-D-ribosyl)imidazole-4-carboxamide is bound at residue asparagine 260. Glutamine 299 and glutamate 312 together coordinate Mg(2+).

It belongs to the phosphohexose mutase family. Mg(2+) is required as a cofactor. Requires Mn(2+) as cofactor.

The enzyme catalyses 5-amino-1-(5-phospho-beta-D-ribosyl)imidazole-4-carboxamide + formate + ATP = 5-formamido-1-(5-phospho-D-ribosyl)imidazole-4-carboxamide + ADP + phosphate. The protein operates within purine metabolism; IMP biosynthesis via de novo pathway; 5-formamido-1-(5-phospho-D-ribosyl)imidazole-4-carboxamide from 5-amino-1-(5-phospho-D-ribosyl)imidazole-4-carboxamide (formate route): step 1/1. In terms of biological role, catalyzes the ATP- and formate-dependent formylation of 5-aminoimidazole-4-carboxamide-1-beta-d-ribofuranosyl 5'-monophosphate (AICAR) to 5-formaminoimidazole-4-carboxamide-1-beta-d-ribofuranosyl 5'-monophosphate (FAICAR) in the absence of folates. This chain is 5-formaminoimidazole-4-carboxamide-1-(beta)-D-ribofuranosyl 5'-monophosphate synthetase, found in Methanosphaera stadtmanae (strain ATCC 43021 / DSM 3091 / JCM 11832 / MCB-3).